Here is a 206-residue protein sequence, read N- to C-terminus: MELKVINQQGQAVESLQAAETLFGREYNEALVHQVVTAYLANARAGNRAQKDRSEINKSTKKPFRQKGTGRARAGRASSPLWRGGGKVFPNSPDENFSHKVNRKMFRAGMAAILSELLRSDRLVIIDDIKVDSPKTKEFAAKAKALGLENALVITGELDENLYLSSRNLSNVLVIEASQADPYSLVRFDKVVVTRDAVKQFEEQWA.

Residues 47 to 94 form a disordered region; it reads NRAQKDRSEINKSTKKPFRQKGTGRARAGRASSPLWRGGGKVFPNSPD. The segment covering 49 to 58 has biased composition (basic and acidic residues); it reads AQKDRSEINK. Over residues 59–74 the composition is skewed to basic residues; it reads STKKPFRQKGTGRARA.

Belongs to the universal ribosomal protein uL4 family. In terms of assembly, part of the 50S ribosomal subunit.

Its function is as follows. One of the primary rRNA binding proteins, this protein initially binds near the 5'-end of the 23S rRNA. It is important during the early stages of 50S assembly. It makes multiple contacts with different domains of the 23S rRNA in the assembled 50S subunit and ribosome. In terms of biological role, forms part of the polypeptide exit tunnel. In Laribacter hongkongensis (strain HLHK9), this protein is Large ribosomal subunit protein uL4.